Here is a 257-residue protein sequence, read N- to C-terminus: LexA repressor (257 aa).

Residues 64-84 (FREIGEAAGLKSPSSVKHQLQ) constitute a DNA-binding region (H-T-H motif). Catalysis depends on for autocatalytic cleavage activity residues Ser181 and Lys218.

It belongs to the peptidase S24 family. Homodimer.

The enzyme catalyses Hydrolysis of Ala-|-Gly bond in repressor LexA.. Functionally, represses a number of genes involved in the response to DNA damage (SOS response), including recA and lexA. In the presence of single-stranded DNA, RecA interacts with LexA causing an autocatalytic cleavage which disrupts the DNA-binding part of LexA, leading to derepression of the SOS regulon and eventually DNA repair. This Bifidobacterium adolescentis (strain ATCC 15703 / DSM 20083 / NCTC 11814 / E194a) protein is LexA repressor.